Here is a 494-residue protein sequence, read N- to C-terminus: Inosine-5'-monophosphate dehydrogenase (494 aa).

2 consecutive CBS domains span residues 93–154 and 158–217; these read IIRN…DEKI and MTTN…CKDS. NAD(+) contacts are provided by residues D251 and 301-303; that span reads GIG. K(+)-binding residues include G303 and G305. An IMP-binding site is contributed by S306. A K(+)-binding site is contributed by C308. C308 functions as the Thioimidate intermediate in the catalytic mechanism. Residues 341 to 343, 364 to 365, and 388 to 392 each bind IMP; these read DGG, GS, and YRGMG. R406 functions as the Proton acceptor in the catalytic mechanism. E421 serves as a coordination point for IMP. K(+) contacts are provided by E475, S476, and H477.

This sequence belongs to the IMPDH/GMPR family. As to quaternary structure, homotetramer. The cofactor is K(+).

The catalysed reaction is IMP + NAD(+) + H2O = XMP + NADH + H(+). It participates in purine metabolism; XMP biosynthesis via de novo pathway; XMP from IMP: step 1/1. Its activity is regulated as follows. Mycophenolic acid (MPA) is a non-competitive inhibitor that prevents formation of the closed enzyme conformation by binding to the same site as the amobile flap. In contrast, mizoribine monophosphate (MZP) is a competitive inhibitor that induces the closed conformation. MPA is a potent inhibitor of mammalian IMPDHs but a poor inhibitor of the bacterial enzymes. MZP is a more potent inhibitor of bacterial IMPDH. In terms of biological role, catalyzes the conversion of inosine 5'-phosphate (IMP) to xanthosine 5'-phosphate (XMP), the first committed and rate-limiting step in the de novo synthesis of guanine nucleotides, and therefore plays an important role in the regulation of cell growth. The polypeptide is Inosine-5'-monophosphate dehydrogenase (Chlorobaculum tepidum (strain ATCC 49652 / DSM 12025 / NBRC 103806 / TLS) (Chlorobium tepidum)).